Here is a 255-residue protein sequence, read N- to C-terminus: Protein C activator (255 aa).

Positions 1 to 18 (MVLIRVLANLLILHLSYA) are cleaved as a signal peptide. Residues 19-24 (QKSSEL) constitute a propeptide that is removed on maturation. A Peptidase S1 domain is found at 25–246 (VIGGDECNIN…YTDWIQSIIS (222 aa)). Cystine bridges form between cysteine 31-cysteine 162, cysteine 49-cysteine 65, cysteine 97-cysteine 253, cysteine 141-cysteine 207, cysteine 173-cysteine 186, and cysteine 197-cysteine 222. Asparagine 45 carries N-linked (GlcNAc...) asparagine glycosylation. The active-site Charge relay system is histidine 64. An N-linked (GlcNAc...) asparagine glycan is attached at asparagine 102. The active-site Charge relay system is aspartate 109. Asparagine 153 carries an N-linked (GlcNAc...) asparagine glycan. The Charge relay system role is filled by serine 201.

It belongs to the peptidase S1 family. Snake venom subfamily. In terms of assembly, monomer. As to expression, expressed by the venom gland.

It is found in the secreted. Snake venom serine protease that selectively cleaves the heavy chain of protein C (PROC). This activation is thrombomodulin-independent. This Agkistrodon piscivorus leucostoma (Western cottonmouth) protein is Protein C activator.